Consider the following 417-residue polypeptide: Serine hydroxymethyltransferase 2 (417 aa).

Residues Leu121 and 125-127 (GHL) contribute to the (6S)-5,6,7,8-tetrahydrofolate site. Lys230 bears the N6-(pyridoxal phosphate)lysine mark. Residue 355–357 (SPF) coordinates (6S)-5,6,7,8-tetrahydrofolate.

The protein belongs to the SHMT family. Homodimer. The cofactor is pyridoxal 5'-phosphate.

It localises to the cytoplasm. It catalyses the reaction (6R)-5,10-methylene-5,6,7,8-tetrahydrofolate + glycine + H2O = (6S)-5,6,7,8-tetrahydrofolate + L-serine. The protein operates within one-carbon metabolism; tetrahydrofolate interconversion. It participates in amino-acid biosynthesis; glycine biosynthesis; glycine from L-serine: step 1/1. Functionally, catalyzes the reversible interconversion of serine and glycine with tetrahydrofolate (THF) serving as the one-carbon carrier. This reaction serves as the major source of one-carbon groups required for the biosynthesis of purines, thymidylate, methionine, and other important biomolecules. Also exhibits THF-independent aldolase activity toward beta-hydroxyamino acids, producing glycine and aldehydes, via a retro-aldol mechanism. The protein is Serine hydroxymethyltransferase 2 of Pseudomonas syringae pv. syringae (strain B728a).